Here is a 356-residue protein sequence, read N- to C-terminus: Phospho-N-acetylmuramoyl-pentapeptide-transferase (356 aa).

Transmembrane regions (helical) follow at residues 3 to 23 (QILF…PLLI), 51 to 71 (TMGG…AKVI), 80 to 100 (GLLV…DDYI), 114 to 134 (AKMA…LQFP), 152 to 172 (FGWS…ILAM), 185 to 205 (LATG…LWQF), 227 to 247 (PLDL…FLWW), 254 to 274 (IFMG…LAIL), 279 to 299 (FLLA…VIQV), and 333 to 353 (FWII…AGWA).

Belongs to the glycosyltransferase 4 family. MraY subfamily. It depends on Mg(2+) as a cofactor.

It localises to the cell membrane. The enzyme catalyses UDP-N-acetyl-alpha-D-muramoyl-L-alanyl-gamma-D-glutamyl-meso-2,6-diaminopimeloyl-D-alanyl-D-alanine + di-trans,octa-cis-undecaprenyl phosphate = di-trans,octa-cis-undecaprenyl diphospho-N-acetyl-alpha-D-muramoyl-L-alanyl-D-glutamyl-meso-2,6-diaminopimeloyl-D-alanyl-D-alanine + UMP. Its pathway is cell wall biogenesis; peptidoglycan biosynthesis. Its function is as follows. Catalyzes the initial step of the lipid cycle reactions in the biosynthesis of the cell wall peptidoglycan: transfers peptidoglycan precursor phospho-MurNAc-pentapeptide from UDP-MurNAc-pentapeptide onto the lipid carrier undecaprenyl phosphate, yielding undecaprenyl-pyrophosphoryl-MurNAc-pentapeptide, known as lipid I. This chain is Phospho-N-acetylmuramoyl-pentapeptide-transferase, found in Streptomyces griseus subsp. griseus (strain JCM 4626 / CBS 651.72 / NBRC 13350 / KCC S-0626 / ISP 5235).